A 489-amino-acid chain; its full sequence is Beta-glucosidase 14 (489 aa).

The first 21 residues, 1 to 21 (MTSKYFSVLVFIILASNEVVA), serve as a signal peptide directing secretion. Position 49 (Q49) interacts with a beta-D-glucoside. N80 is a glycosylation site (N-linked (GlcNAc...) asparagine). A beta-D-glucoside contacts are provided by residues H153 and 198–199 (NE). The active-site Proton donor is E199. C218 and C226 are disulfide-bonded. N225 carries N-linked (GlcNAc...) asparagine glycosylation. Y343 serves as a coordination point for a beta-D-glucoside. N-linked (GlcNAc...) asparagine glycosylation occurs at N357. Residues E396, W441, 448–449 (EW), and F457 contribute to the a beta-D-glucoside site. E396 (nucleophile) is an active-site residue.

Belongs to the glycosyl hydrolase 1 family.

The enzyme catalyses Hydrolysis of terminal, non-reducing beta-D-glucosyl residues with release of beta-D-glucose.. The sequence is that of Beta-glucosidase 14 from Arabidopsis thaliana (Mouse-ear cress).